A 624-amino-acid polypeptide reads, in one-letter code: Chaperone protein HtpG (624 aa).

The tract at residues 1–336 is a; substrate-binding; that stretch reads MKGQETRGFQ…SNDLPLNVSR (336 aa). Positions 337–552 are b; the sequence is EILQDSTVTR…ADEMSTQMAK (216 aa). Residues 553–624 are c; sequence LFAAAGQSVP…IRRMNQLLVS (72 aa).

It belongs to the heat shock protein 90 family. Homodimer.

Its subcellular location is the cytoplasm. Molecular chaperone. Has ATPase activity. The chain is Chaperone protein HtpG from Salmonella paratyphi B (strain ATCC BAA-1250 / SPB7).